Reading from the N-terminus, the 23-residue chain is Magainin-B2 (23 aa).

Expressed by the skin glands.

The protein localises to the secreted. In terms of biological role, has antimicrobial activity against Gram-negative bacterium E.coli ATCC 25922 (MIC=50 uM) and against fungus C.albicans ATCC 90028 (MIC=100 uM). Has no hemolytic activity against human erythrocytes even at high concentrations. In Xenopus borealis (Kenyan clawed frog), this protein is Magainin-B2.